The following is a 151-amino-acid chain: Protein Turandot Z (151 aa).

The N-terminal stretch at 1–23 (MSRLIHLSFVLALLACLTGPISA) is a signal peptide.

It belongs to the Turandot family.

The protein localises to the secreted. A humoral factor that may play a role in stress tolerance. This chain is Protein Turandot Z, found in Drosophila pseudoobscura pseudoobscura (Fruit fly).